A 325-amino-acid polypeptide reads, in one-letter code: BTB/POZ domain-containing protein KCTD12 (325 aa).

Positions 1 to 28 (MALADSTRGLPNGGGGGGGSGSSSSSAE) are disordered. Ala-2 carries the N-acetylalanine modification. Residues 11 to 21 (PNGGGGGGGSG) are compositionally biased toward gly residues. Residue Tyr-119 is modified to Phosphotyrosine. The disordered stretch occupies residues 129-202 (LGAPQQPGPG…PLLTPSQSLD (74 aa)). Ser-151, Ser-171, and Ser-185 each carry phosphoserine. Thr-196 bears the Phosphothreonine mark. Ser-200 is subject to Phosphoserine.

Interacts as a tetramer with GABBR1 and GABBR2. As to expression, present in a variety of fetal organs, with highest expression levels in the cochlea and brain and, in stark contrast, is detected only at extremely low levels in adult organs, such as brain and lung.

The protein resides in the presynaptic cell membrane. The protein localises to the postsynaptic cell membrane. Functionally, auxiliary subunit of GABA-B receptors that determine the pharmacology and kinetics of the receptor response. Increases agonist potency and markedly alter the G-protein signaling of the receptors by accelerating onset and promoting desensitization. The chain is BTB/POZ domain-containing protein KCTD12 (KCTD12) from Homo sapiens (Human).